The sequence spans 281 residues: uncharacterized protein (281 aa).

It localises to the plastid. The protein resides in the chloroplast. This is an uncharacterized protein from Euglena gracilis.